The chain runs to 182 residues: MECIQHESCFDVDDREDAQQIKEQEGTEMVSITQAAKLHNVTRQAIYVAIKQKKLKASKTTRWEIDLKDLEDYKRNRYSRKKSLYQGELLFDNEKGCYSVNQVADMLGIPVQKVYYATRTGTMRGERKGAAWVISQSEIDRYKSEYLNKQTAKKAKGVTVVEHAIAKPEETVSSETLLFENN.

Belongs to the EUO family.

The chain is Early upstream open reading frame from Chlamydophila psittaci (strain ATCC VR-125 / 6BC) (Chlamydia psittaci).